Consider the following 39-residue polypeptide: Cytochrome b559 subunit beta (39 aa).

A helical membrane pass occupies residues 14–30 (WLAVHGLAIPTVSFLGS). A heme-binding site is contributed by His18.

The protein belongs to the PsbE/PsbF family. In terms of assembly, heterodimer of an alpha subunit and a beta subunit. PSII is composed of 1 copy each of membrane proteins PsbA, PsbB, PsbC, PsbD, PsbE, PsbF, PsbH, PsbI, PsbJ, PsbK, PsbL, PsbM, PsbT, PsbX, PsbY, PsbZ, Psb30/Ycf12, at least 3 peripheral proteins of the oxygen-evolving complex and a large number of cofactors. It forms dimeric complexes. The cofactor is heme b.

It is found in the plastid. Its subcellular location is the chloroplast thylakoid membrane. Its function is as follows. This b-type cytochrome is tightly associated with the reaction center of photosystem II (PSII). PSII is a light-driven water:plastoquinone oxidoreductase that uses light energy to abstract electrons from H(2)O, generating O(2) and a proton gradient subsequently used for ATP formation. It consists of a core antenna complex that captures photons, and an electron transfer chain that converts photonic excitation into a charge separation. The polypeptide is Cytochrome b559 subunit beta (Beta vulgaris (Sugar beet)).